Here is a 240-residue protein sequence, read N- to C-terminus: Flagellar L-ring protein (240 aa).

A signal peptide spans 1–20 (MIRNFLLFFMPIYAILFLSG). Cysteine 21 carries N-palmitoyl cysteine lipidation. The S-diacylglycerol cysteine moiety is linked to residue cysteine 21.

Belongs to the FlgH family. The basal body constitutes a major portion of the flagellar organelle and consists of four rings (L,P,S, and M) mounted on a central rod.

The protein resides in the cell outer membrane. It is found in the bacterial flagellum basal body. Functionally, assembles around the rod to form the L-ring and probably protects the motor/basal body from shearing forces during rotation. The chain is Flagellar L-ring protein from Sulfurimonas denitrificans (strain ATCC 33889 / DSM 1251) (Thiomicrospira denitrificans (strain ATCC 33889 / DSM 1251)).